Here is a 323-residue protein sequence, read N- to C-terminus: MGSLSFASETKKELTGIEVKPCCLKAELSALIRMNGSISFSNRRLLLNIQTENAAIARRIYTLLKKGYDVVVELLVRKKMRLKKNNVYIVRVVEGTHELLSDLKIMEEGFSFVHAISPELVQKKCCKRSYLRGAFLAGGSVNNPETSSYHLEIFSLYREHNESLCELMNTSFHLHARTLERKKGFITYLKEAEKIAEFLSVIGAHQALLRFEDVRIVRDMRNSVNRLVNCETANLNKTIGAALRQVENIRYIDETIGLDQLPEKLREIAKLRIAYQDVTLKELGEMVSGGKISKSGINHRLRKLDEIAERLRAGQPIDFHKSL.

Positions 279–313 form a DNA-binding region, H-T-H motif; the sequence is TLKELGEMVSGGKISKSGINHRLRKLDEIAERLRA.

Belongs to the WhiA family.

Functionally, involved in cell division and chromosome segregation. This Anoxybacillus flavithermus (strain DSM 21510 / WK1) protein is Probable cell division protein WhiA.